A 278-amino-acid chain; its full sequence is Thioredoxin-related transmembrane protein 1 (278 aa).

Positions 1–26 (MAPSGSLRIPVAVLLLLLWGAPWAHG) are cleaved as a signal peptide. A Thioredoxin domain is found at 27 to 132 (KRSDVRIITD…FINFISDKEW (106 aa)). The Extracellular segment spans residues 27 to 180 (KRSDVRIITD…EDLGLPIWGS (154 aa)). Residues C56 and C59 each act as nucleophile in the active site. C56 and C59 are joined by a disulfide. A helical transmembrane segment spans residues 181–203 (YTVFALATLLSGLLLGLFMIFVA). At 204–278 (DCLCPSKRRR…VGPSLATDKS (75 aa)) the chain is on the cytoplasmic side. S-palmitoyl cysteine attachment occurs at residues C205 and C207. The segment at 213–278 (RPQPYPSRKL…VGPSLATDKS (66 aa)) is disordered. Phosphoserine occurs at positions 226, 245, 268, 272, and 278. Over residues 235–250 (EEQEADVEDVSEEESE) the composition is skewed to acidic residues.

Interacts with ATP2A2. In terms of processing, palmitoylated; palmitoylation is required for localization to mitochondria-associated endoplasmic reticulum membrane (MAM).

It localises to the endoplasmic reticulum membrane. The protein resides in the mitochondrion membrane. Its subcellular location is the secreted. The enzyme catalyses Catalyzes the rearrangement of -S-S- bonds in proteins.. Thiredoxin domain-containing protein that participates in various redox reactions through the reversible oxidation of its active center dithiol to a disulfide and catalyze dithiol-disulfide exchange reactions. Acts as a key inhibitor of the alternative triglyceride biosynthesis pathway by inhibiting the activity of TMEM68/DIESL at the endoplasmic reticulum, thereby restricting accumulation of triacylglycerol. The alternative triglyceride biosynthesis pathway mediates formation of triacylglycerol from diacylglycerol and membrane phospholipids. Acts as a protein disulfide isomerase by catalyzing formation or reduction of disulfide bonds. Specifically mediates formation of disulfide bonds of transmembrane proteins at the endoplasmic reticulum membrane. Involved in endoplasmic reticulum-associated degradation (ERAD) via its protein disulfide isomerase activity by acting on folding-defective polypeptides at the endoplasmic reticulum membrane. Acts as a negative regulator of platelet aggregation following secretion in the extracellular space. Acts as a regulator of endoplasmic reticulum-mitochondria contact sites via its ability to regulate redox signals. Regulates endoplasmic reticulum-mitochondria Ca(2+) flux. The protein is Thioredoxin-related transmembrane protein 1 (TMX1) of Bos taurus (Bovine).